A 492-amino-acid chain; its full sequence is Glutamyl-tRNA(Gln) amidotransferase subunit A (492 aa).

Active-site charge relay system residues include lysine 78 and serine 158. Serine 182 acts as the Acyl-ester intermediate in catalysis.

Belongs to the amidase family. GatA subfamily. As to quaternary structure, heterotrimer of A, B and C subunits.

It catalyses the reaction L-glutamyl-tRNA(Gln) + L-glutamine + ATP + H2O = L-glutaminyl-tRNA(Gln) + L-glutamate + ADP + phosphate + H(+). Its function is as follows. Allows the formation of correctly charged Gln-tRNA(Gln) through the transamidation of misacylated Glu-tRNA(Gln) in organisms which lack glutaminyl-tRNA synthetase. The reaction takes place in the presence of glutamine and ATP through an activated gamma-phospho-Glu-tRNA(Gln). This is Glutamyl-tRNA(Gln) amidotransferase subunit A from Parvibaculum lavamentivorans (strain DS-1 / DSM 13023 / NCIMB 13966).